Reading from the N-terminus, the 262-residue chain is Small ribosomal subunit protein eS1y (262 aa).

Residues 1-18 (MAVGKNKRISKGRKGGKK) show a composition bias toward basic residues. A disordered region spans residues 1 to 21 (MAVGKNKRISKGRKGGKKKAV).

It belongs to the eukaryotic ribosomal protein eS1 family. In terms of assembly, component of the small ribosomal subunit. Mature ribosomes consist of a small (40S) and a large (60S) subunit. The 40S subunit contains about 33 different proteins and 1 molecule of RNA (18S). The 60S subunit contains about 49 different proteins and 3 molecules of RNA (25S, 5.8S and 5S).

It localises to the cytoplasm. The polypeptide is Small ribosomal subunit protein eS1y (Arabidopsis thaliana (Mouse-ear cress)).